Consider the following 406-residue polypeptide: 4-hydroxy-3-methylbut-2-en-1-yl diphosphate synthase (flavodoxin) (406 aa).

The [4Fe-4S] cluster site is built by Cys297, Cys300, Cys343, and Glu350.

The protein belongs to the IspG family. [4Fe-4S] cluster serves as cofactor.

It carries out the reaction (2E)-4-hydroxy-3-methylbut-2-enyl diphosphate + oxidized [flavodoxin] + H2O + 2 H(+) = 2-C-methyl-D-erythritol 2,4-cyclic diphosphate + reduced [flavodoxin]. It functions in the pathway isoprenoid biosynthesis; isopentenyl diphosphate biosynthesis via DXP pathway; isopentenyl diphosphate from 1-deoxy-D-xylulose 5-phosphate: step 5/6. Functionally, converts 2C-methyl-D-erythritol 2,4-cyclodiphosphate (ME-2,4cPP) into 1-hydroxy-2-methyl-2-(E)-butenyl 4-diphosphate. The protein is 4-hydroxy-3-methylbut-2-en-1-yl diphosphate synthase (flavodoxin) of Thermus thermophilus (strain ATCC 27634 / DSM 579 / HB8).